The primary structure comprises 317 residues: Apolipoprotein E (317 aa).

Positions 1 to 18 (MKVLWAALLVTFLAGCQA) are cleaved as a signal peptide. Tandem repeats lie at residues 80 to 101 (ALMDETMKELKAYRSELEEQLT), 102 to 123 (PVAEETRARLSKELQAAQARLG), 124 to 145 (ADMEDVRGRLVQYRGEVQAMLG), 146 to 167 (QSTEELRARLASHLRKLRKRLL), 168 to 189 (RDADDLQKRLAVYQAGAREGAE), 190 to 211 (RGVSAIRERLGPLVEQGRVRAA), 212 to 233 (TVGSLAGQPLQERAQAWGERLR), and 234 to 255 (ARMEEVGGRTRDRLDEVKEQVA). The tract at residues 80-255 (ALMDETMKEL…RLDEVKEQVA (176 aa)) is 8 X 22 AA approximate tandem repeats. Met143 bears the Methionine sulfoxide mark. Position 147 is a phosphoserine (Ser147). Residues 158-168 (HLRKLRKRLLR) form an LDL and other lipoprotein receptors binding region. Position 162–165 (162–165 (LRKR)) interacts with heparin. Residues 210–290 (AATVGSLAGQ…SWFEPLVEDM (81 aa)) are lipid-binding and lipoprotein association. 229–236 (GERLRARM) lines the heparin pocket. The tract at residues 266–317 (QQIRLQAEAFQARLKSWFEPLVEDMQRQWAGLVEKVQAAVGTSAAPVPSDNH) is homooligomerization. Residues 278–290 (RLKSWFEPLVEDM) are specificity for association with VLDL.

The protein belongs to the apolipoprotein A1/A4/E family. As to quaternary structure, homotetramer. May interact with ABCA1; functionally associated with ABCA1 in the biogenesis of HDLs. May interact with APP/A4 amyloid-beta peptide; the interaction is extremely stable in vitro but its physiological significance is unclear. May interact with MAPT. May interact with MAP2. In the cerebrospinal fluid, interacts with secreted SORL1. Interacts with PMEL; this allows the loading of PMEL luminal fragment on ILVs to induce fibril nucleation. Post-translationally, APOE exists as multiple glycosylated and sialylated glycoforms within cells and in plasma. The extent of glycosylation and sialylation are tissue and context specific. In terms of processing, glycated in plasma VLDL. Phosphorylated by FAM20C in the extracellular medium.

The protein localises to the secreted. It is found in the extracellular space. It localises to the extracellular matrix. The protein resides in the extracellular vesicle. Its subcellular location is the endosome. The protein localises to the multivesicular body. APOE is an apolipoprotein, a protein associating with lipid particles, that mainly functions in lipoprotein-mediated lipid transport between organs via the plasma and interstitial fluids. APOE is a core component of plasma lipoproteins and is involved in their production, conversion and clearance. Apolipoproteins are amphipathic molecules that interact both with lipids of the lipoprotein particle core and the aqueous environment of the plasma. As such, APOE associates with chylomicrons, chylomicron remnants, very low density lipoproteins (VLDL) and intermediate density lipoproteins (IDL) but shows a preferential binding to high-density lipoproteins (HDL). It also binds a wide range of cellular receptors including the LDL receptor/LDLR, the LDL receptor-related proteins LRP1, LRP2 and LRP8 and the very low-density lipoprotein receptor/VLDLR that mediate the cellular uptake of the APOE-containing lipoprotein particles. Finally, APOE also has a heparin-binding activity and binds heparan-sulfate proteoglycans on the surface of cells, a property that supports the capture and the receptor-mediated uptake of APOE-containing lipoproteins by cells. A main function of APOE is to mediate lipoprotein clearance through the uptake of chylomicrons, VLDLs, and HDLs by hepatocytes. APOE is also involved in the biosynthesis by the liver of VLDLs as well as their uptake by peripheral tissues ensuring the delivery of triglycerides and energy storage in muscle, heart and adipose tissues. By participating in the lipoprotein-mediated distribution of lipids among tissues, APOE plays a critical role in plasma and tissues lipid homeostasis. APOE is also involved in two steps of reverse cholesterol transport, the HDLs-mediated transport of cholesterol from peripheral tissues to the liver, and thereby plays an important role in cholesterol homeostasis. First, it is functionally associated with ABCA1 in the biogenesis of HDLs in tissues. Second, it is enriched in circulating HDLs and mediates their uptake by hepatocytes. APOE also plays an important role in lipid transport in the central nervous system, regulating neuron survival and sprouting. This is Apolipoprotein E (APOE) from Hylobates lar (Lar gibbon).